The following is a 557-amino-acid chain: Putative sensory transducer protein (557 aa).

Residues 122-145 (TASTVMIVVIFVGILIAIALGVFI) form a helical membrane-spanning segment. In terms of domain architecture, HAMP spans 147-199 (RIISKPIGQMVEAADRLALGDVEVDVKAETRDEIGKLAESFKRMIENIREQAY). The region spanning 243–472 (VAAQVAAGAK…ESAAASEELS (230 aa)) is the Methyl-accepting transducer domain. Position 268 is a glutamate methyl ester (Gln) (glutamine 268). Position 274 is a glutamate methyl ester (Glu) (glutamate 274). Glutamine 281 bears the Glutamate methyl ester (Gln) mark. Glutamate 463 is subject to Glutamate methyl ester (Glu). The segment covering 511-541 (DYTENKQPKSYSKEENGEYSDGKETAEKDVG) has biased composition (basic and acidic residues). The interval 511 to 542 (DYTENKQPKSYSKEENGEYSDGKETAEKDVGG) is disordered.

Belongs to the methyl-accepting chemotaxis (MCP) protein family.

It localises to the cell membrane. In terms of biological role, may bind attractants or detect changes in the extracellular concentration of soluble sugars. The sequence is that of Putative sensory transducer protein from Acetivibrio thermocellus (strain ATCC 27405 / DSM 1237 / JCM 9322 / NBRC 103400 / NCIMB 10682 / NRRL B-4536 / VPI 7372) (Clostridium thermocellum).